A 274-amino-acid chain; its full sequence is Undecaprenyl-diphosphatase (274 aa).

The next 6 membrane-spanning stretches (helical) occupy residues 44 to 64 (AKVF…LVYW), 85 to 105 (LNVV…GKMI), 109 to 129 (LFIP…ILWA), 185 to 205 (ATDF…AYSL), 214 to 234 (VADI…AWLC), and 247 to 267 (FIPF…TAWT).

Belongs to the UppP family.

It is found in the cell inner membrane. It carries out the reaction di-trans,octa-cis-undecaprenyl diphosphate + H2O = di-trans,octa-cis-undecaprenyl phosphate + phosphate + H(+). Its function is as follows. Catalyzes the dephosphorylation of undecaprenyl diphosphate (UPP). Confers resistance to bacitracin. The sequence is that of Undecaprenyl-diphosphatase from Variovorax paradoxus (strain S110).